We begin with the raw amino-acid sequence, 123 residues long: UPF0102 protein PSPPH_4120 (123 aa).

The protein belongs to the UPF0102 family.

This Pseudomonas savastanoi pv. phaseolicola (strain 1448A / Race 6) (Pseudomonas syringae pv. phaseolicola (strain 1448A / Race 6)) protein is UPF0102 protein PSPPH_4120.